Reading from the N-terminus, the 343-residue chain is DNA polymerase III subunit delta (343 aa).

Domain stretches follow at residues M1–Q140, T141–A210, and H211–G343.

It belongs to the DNA polymerase HolA subunit family. As to quaternary structure, the DNA polymerase III holoenzyme complex contains at least 10 different subunits organized into 3 functionally essential subassemblies: the Pol III core, the beta sliding clamp processivity factor and the clamp-loading complex. The Pol III core (subunits alpha, epsilon and theta) contains the polymerase and the 3'-5' exonuclease proofreading activities. The polymerase is tethered to the template via the dimeric beta sliding clamp processivity factor. The clamp-loading complex (also called gamma complex) assembles the beta sliding clamp onto the primed template and plays a central role in the organization and communication at the replication fork. The clamp-loading complex contains delta, delta', psi and chi, and 3 copies of either or both of two different DnaX proteins, gamma and tau. The DNA replisome complex has a single clamp loader (3 tau and 1 each of delta, delta', psi and chi subunits) which binds 3 Pol III cores (1 core on the leading strand and 2 on the lagging strand) each with a beta sliding clamp dimer. Additional proteins in the replisome are other copies of gamma, psi and chi, Ssb, DNA helicase and RNA primase. The clamp loader hydrolyzes ATP to assemble the beta processivity factor onto the primed template and plays a central role in the organization and communication at the replication fork; the minimal complex to load the beta sliding clamp on DNA is delta, delta', gamma.

The catalysed reaction is DNA(n) + a 2'-deoxyribonucleoside 5'-triphosphate = DNA(n+1) + diphosphate. In terms of biological role, part of the beta sliding clamp loading complex, which hydrolyzes ATP to load the beta clamp onto primed DNA to form the DNA replication pre-initiation complex. DNA polymerase III is a complex, multichain enzyme responsible for most of the replicative synthesis in bacteria. This DNA polymerase also exhibits 3'-5' exonuclease activity. The delta subunit is the wrench that will open the beta subunit dimer, which has been modeled to leave a gap large enough for ssDNA to pass through. The gamma complex (gamma(3),delta,delta') is thought to load beta dimers onto DNA by binding ATP which alters the complex's conformation so it can bind beta sliding clamp dimers and open them at one interface. Primed DNA is recognized, ATP is hydrolyzed releasing the gamma complex and closing the beta sliding clamp ring around the primed DNA. This chain is DNA polymerase III subunit delta (holA), found in Escherichia coli (strain K12).